The following is a 203-amino-acid chain: Xrcc4-like factor 1 (203 aa).

Belongs to the XRCC4-XLF family. XLF subfamily.

It is found in the nucleus. In terms of biological role, involved in double-strand break repair via non-homologous end joining (NHEJ); the repair of a double-strand break in DNA in which the two broken ends are rejoined with little or no sequence complementarity. Has a role in meiosis. The protein is Xrcc4-like factor 1 (xlf1) of Schizosaccharomyces pombe (strain 972 / ATCC 24843) (Fission yeast).